A 610-amino-acid chain; its full sequence is Probable indole-3-acetic acid-amido synthetase GH3.1 (610 aa).

This sequence belongs to the IAA-amido conjugating enzyme family. In terms of tissue distribution, expressed in flowers.

Functionally, may catalyze the synthesis of indole-3-acetic acid (IAA)-amino acid conjugates, providing a mechanism for the plant to cope with the presence of excess auxin. The sequence is that of Probable indole-3-acetic acid-amido synthetase GH3.1 (GH3.1) from Oryza sativa subsp. japonica (Rice).